A 440-amino-acid polypeptide reads, in one-letter code: Methylenetetrahydrofolate--tRNA-(uracil-5-)-methyltransferase TrmFO (440 aa).

14-19 (GAGLAG) is a binding site for FAD.

Belongs to the MnmG family. TrmFO subfamily. FAD serves as cofactor.

The protein localises to the cytoplasm. It carries out the reaction uridine(54) in tRNA + (6R)-5,10-methylene-5,6,7,8-tetrahydrofolate + NADH + H(+) = 5-methyluridine(54) in tRNA + (6S)-5,6,7,8-tetrahydrofolate + NAD(+). The catalysed reaction is uridine(54) in tRNA + (6R)-5,10-methylene-5,6,7,8-tetrahydrofolate + NADPH + H(+) = 5-methyluridine(54) in tRNA + (6S)-5,6,7,8-tetrahydrofolate + NADP(+). Its function is as follows. Catalyzes the folate-dependent formation of 5-methyl-uridine at position 54 (M-5-U54) in all tRNAs. The sequence is that of Methylenetetrahydrofolate--tRNA-(uracil-5-)-methyltransferase TrmFO from Bdellovibrio bacteriovorus (strain ATCC 15356 / DSM 50701 / NCIMB 9529 / HD100).